A 259-amino-acid polypeptide reads, in one-letter code: Proteasome assembly chaperone 2 (259 aa).

Belongs to the PSMG2 family. As to quaternary structure, forms a heterodimer with psmg1. Degraded by the proteasome upon completion of 20S proteasome maturation.

Its subcellular location is the nucleus. Its function is as follows. Chaperone protein which promotes assembly of the 20S proteasome as part of a heterodimer with psmg1. In Xenopus laevis (African clawed frog), this protein is Proteasome assembly chaperone 2.